A 287-amino-acid polypeptide reads, in one-letter code: Energy-coupling factor transporter ATP-binding protein EcfA (287 aa).

Residues 19–252 form the ABC transporter domain; the sequence is FEIQNVSFSY…EEFLASSALD (234 aa). Residue 52–59 coordinates ATP; sequence GHNGSGKS.

Belongs to the ABC transporter superfamily. Energy-coupling factor EcfA family. As to quaternary structure, forms a stable energy-coupling factor (ECF) transporter complex composed of 2 membrane-embedded substrate-binding proteins (S component), 2 ATP-binding proteins (A component) and 2 transmembrane proteins (T component).

It is found in the cell membrane. Functionally, ATP-binding (A) component of a common energy-coupling factor (ECF) ABC-transporter complex. Unlike classic ABC transporters this ECF transporter provides the energy necessary to transport a number of different substrates. This chain is Energy-coupling factor transporter ATP-binding protein EcfA, found in Malacoplasma penetrans (strain HF-2) (Mycoplasma penetrans).